The chain runs to 168 residues: Protein GrpE (168 aa).

Belongs to the GrpE family. In terms of assembly, homodimer.

The protein localises to the cytoplasm. Its function is as follows. Participates actively in the response to hyperosmotic and heat shock by preventing the aggregation of stress-denatured proteins, in association with DnaK and GrpE. It is the nucleotide exchange factor for DnaK and may function as a thermosensor. Unfolded proteins bind initially to DnaJ; upon interaction with the DnaJ-bound protein, DnaK hydrolyzes its bound ATP, resulting in the formation of a stable complex. GrpE releases ADP from DnaK; ATP binding to DnaK triggers the release of the substrate protein, thus completing the reaction cycle. Several rounds of ATP-dependent interactions between DnaJ, DnaK and GrpE are required for fully efficient folding. The protein is Protein GrpE of Thermotoga neapolitana (strain ATCC 49049 / DSM 4359 / NBRC 107923 / NS-E).